Consider the following 393-residue polypeptide: Formate-dependent phosphoribosylglycinamide formyltransferase (393 aa).

Residues 22 to 23 (EL) and Glu-82 each bind N(1)-(5-phospho-beta-D-ribosyl)glycinamide. Residues Arg-114, Lys-155, 160–165 (SSGKGQ), 195–198 (EGLV), and Glu-203 each bind ATP. Residues 119 to 308 (RLAAETLQLP…EFALHVRAFL (190 aa)) enclose the ATP-grasp domain. Mg(2+) is bound by residues Glu-267 and Glu-279. Residues Asp-286, Lys-355, and 362–363 (RR) contribute to the N(1)-(5-phospho-beta-D-ribosyl)glycinamide site.

This sequence belongs to the PurK/PurT family. As to quaternary structure, homodimer.

It catalyses the reaction N(1)-(5-phospho-beta-D-ribosyl)glycinamide + formate + ATP = N(2)-formyl-N(1)-(5-phospho-beta-D-ribosyl)glycinamide + ADP + phosphate + H(+). Its pathway is purine metabolism; IMP biosynthesis via de novo pathway; N(2)-formyl-N(1)-(5-phospho-D-ribosyl)glycinamide from N(1)-(5-phospho-D-ribosyl)glycinamide (formate route): step 1/1. In terms of biological role, involved in the de novo purine biosynthesis. Catalyzes the transfer of formate to 5-phospho-ribosyl-glycinamide (GAR), producing 5-phospho-ribosyl-N-formylglycinamide (FGAR). Formate is provided by PurU via hydrolysis of 10-formyl-tetrahydrofolate. This Yersinia pseudotuberculosis serotype O:3 (strain YPIII) protein is Formate-dependent phosphoribosylglycinamide formyltransferase.